A 513-amino-acid polypeptide reads, in one-letter code: Noroxomaritidine synthase 1 (513 aa).

A helical transmembrane segment spans residues isoleucine 18 to alanine 34. Cysteine 458 provides a ligand contact to heme.

Belongs to the cytochrome P450 family. The cofactor is heme. As to expression, mostly expressed in stems, and, to a lower extent, in bulbs, roots, leaves and flowers.

The protein resides in the membrane. It carries out the reaction 4'-O-methylnorbelladine + reduced [NADPH--hemoprotein reductase] + O2 = (10bR,4aS)-noroxomaritidine + oxidized [NADPH--hemoprotein reductase] + 2 H2O + H(+). The catalysed reaction is 4'-O-methylnorbelladine + reduced [NADPH--hemoprotein reductase] + O2 = (10bS,4aR)-noroxomaritidine + oxidized [NADPH--hemoprotein reductase] + 2 H2O + H(+). It functions in the pathway alkaloid biosynthesis. Functionally, cytochrome P450 that catalyzes an intramolecular para-para' C-C phenol coupling of 4'-O-methylnorbelladine in alkaloids biosynthesis, including haemanthamine- and crinamine-type alkaloids, promising anticancer agents. Catalyzes the formation of (10bR,4aS)-noroxomaritidine and (10bS,4aR)-noroxomaritidine from 4'-O-methylnorbelladine. This Narcissus pseudonarcissus (Daffodil) protein is Noroxomaritidine synthase 1.